The following is a 472-amino-acid chain: E3 ubiquitin-protein ligase MYLIP-A (472 aa).

An FERM domain is found at 1-279; it reads MLCHVTRPDA…ETHAFYRCDT (279 aa). The RING-type zinc finger occupies 384 to 419; sequence CMLCCEEEIDAAFCPCGHMVCCQNCAAQLQSCPVCR.

In terms of assembly, interacts with anxa5. As to expression, ubiquitous.

It is found in the cytoplasm. Its subcellular location is the cytosol. It carries out the reaction S-ubiquitinyl-[E2 ubiquitin-conjugating enzyme]-L-cysteine + [acceptor protein]-L-lysine = [E2 ubiquitin-conjugating enzyme]-L-cysteine + N(6)-ubiquitinyl-[acceptor protein]-L-lysine.. It participates in protein modification; protein ubiquitination. Its function is as follows. E3 ubiquitin-protein ligase that mediates ubiquitination and subsequent proteasomal degradation of myosin regulatory light chain (MRLC). Regulates cell movements during gastrulation by acting downstream of fz7 to antagonize the frizzled-signaling pathway. The chain is E3 ubiquitin-protein ligase MYLIP-A (mylipa) from Danio rerio (Zebrafish).